Consider the following 305-residue polypeptide: Glycine--tRNA ligase alpha subunit (305 aa).

It belongs to the class-II aminoacyl-tRNA synthetase family. In terms of assembly, tetramer of two alpha and two beta subunits.

The protein resides in the cytoplasm. The catalysed reaction is tRNA(Gly) + glycine + ATP = glycyl-tRNA(Gly) + AMP + diphosphate. This is Glycine--tRNA ligase alpha subunit from Streptococcus pneumoniae (strain CGSP14).